The chain runs to 283 residues: MKIIGGPASQLLASRTARALGTEPVLCEFNRFPDGELYLRIADEIENEKVTIIQSTPTDSDFVALLQLIDACEGAAEINVVIPYMGYARQDKKFKPGESISARAIARCINASRIFTINIHERSILDHFPCPAVNLDAASLVGEYIAGSGLENPMLVAPDEGAQGLVKNVAAGHGFDHDHLQKTRLSGDTVVIKTKNLDVTGRHVVLVDDMIATGGTMAESVRMLKAQGAIDVHLACVHPVLTRNAALRLFNAGVKDIIATDTLEKAESLLSVAPLIAEALKRL.

Residues 34–36 (DGE) and 89–90 (RQ) contribute to the ATP site. H120 and D159 together coordinate Mg(2+). The active site involves K182. 2 residues coordinate D-ribose 5-phosphate: R184 and D208.

Belongs to the ribose-phosphate pyrophosphokinase family. Class III (archaeal) subfamily. Mg(2+) is required as a cofactor.

The protein resides in the cytoplasm. It carries out the reaction D-ribose 5-phosphate + ATP = 5-phospho-alpha-D-ribose 1-diphosphate + AMP + H(+). Its pathway is metabolic intermediate biosynthesis; 5-phospho-alpha-D-ribose 1-diphosphate biosynthesis; 5-phospho-alpha-D-ribose 1-diphosphate from D-ribose 5-phosphate (route I): step 1/1. Functionally, involved in the biosynthesis of the central metabolite phospho-alpha-D-ribosyl-1-pyrophosphate (PRPP) via the transfer of pyrophosphoryl group from ATP to 1-hydroxyl of ribose-5-phosphate (Rib-5-P). The protein is Ribose-phosphate pyrophosphokinase of Methanosarcina acetivorans (strain ATCC 35395 / DSM 2834 / JCM 12185 / C2A).